The sequence spans 214 residues: ATP-dependent Clp protease proteolytic subunit (214 aa).

The active-site Nucleophile is the serine 110. Histidine 135 is a catalytic residue.

It belongs to the peptidase S14 family. In terms of assembly, fourteen ClpP subunits assemble into 2 heptameric rings which stack back to back to give a disk-like structure with a central cavity, resembling the structure of eukaryotic proteasomes.

It localises to the cytoplasm. It catalyses the reaction Hydrolysis of proteins to small peptides in the presence of ATP and magnesium. alpha-casein is the usual test substrate. In the absence of ATP, only oligopeptides shorter than five residues are hydrolyzed (such as succinyl-Leu-Tyr-|-NHMec, and Leu-Tyr-Leu-|-Tyr-Trp, in which cleavage of the -Tyr-|-Leu- and -Tyr-|-Trp bonds also occurs).. Its function is as follows. Cleaves peptides in various proteins in a process that requires ATP hydrolysis. Has a chymotrypsin-like activity. Plays a major role in the degradation of misfolded proteins. This chain is ATP-dependent Clp protease proteolytic subunit, found in Legionella pneumophila (strain Corby).